The chain runs to 625 residues: ATP-dependent rRNA helicase spb4 (625 aa).

Residues 14 to 42 carry the Q motif motif; it reads WDALTPSLAEWILDAIKSMGFEKMTPVQA. The Helicase ATP-binding domain occupies 45 to 246; that stretch reads IPLFMGNKDV…RVGLRNPVKI (202 aa). 58–65 provides a ligand contact to ATP; sequence AVTGSGKT. A DEAD box motif is present at residues 194 to 197; sequence DEAD. The Helicase C-terminal domain occupies 278 to 436; that stretch reads ALLSLLSQLQ…TTDDAAKILI (159 aa). Residues 550 to 597 are disordered; it reads KKQREAWSQKHEKQDLKELKREKKKRKREIERLDKMTDEEKRVEQEKE. Composition is skewed to basic and acidic residues over residues 553 to 570 and 577 to 597; these read REAWSQKHEKQDLKELKR and REIERLDKMTDEEKRVEQEKE. The stretch at 557–614 forms a coiled coil; the sequence is SQKHEKQDLKELKREKKKRKREIERLDKMTDEEKRVEQEKERELQALIEQVKRRKIED.

It belongs to the DEAD box helicase family. DDX55/SPB4 subfamily. Component of pre-60S ribosomal complexes.

The protein resides in the nucleus. It is found in the nucleolus. The catalysed reaction is ATP + H2O = ADP + phosphate + H(+). Its function is as follows. ATP-binding RNA helicase involved in the biogenesis of 60S ribosomal subunits. Binds 90S pre-ribosomal particles and dissociates from pre-60S ribosomal particles after processing of 27SB pre-rRNA. Required for the normal formation of 18S rRNA through the processing of pre-rRNAs at sites A0, A1 and A2, and the normal formation of 25S and 5.8S rRNAs through the processing of pre-rRNAs at sites C1 and C2. The sequence is that of ATP-dependent rRNA helicase spb4 from Sclerotinia sclerotiorum (strain ATCC 18683 / 1980 / Ss-1) (White mold).